Here is a 365-residue protein sequence, read N- to C-terminus: Chorismate synthase (365 aa).

Arginine 47 is a binding site for NADP(+). FMN is bound by residues 124–126 (RAS), glycine 287, 302–306 (KPTAT), and arginine 328.

Belongs to the chorismate synthase family. In terms of assembly, homotetramer. It depends on FMNH2 as a cofactor.

The catalysed reaction is 5-O-(1-carboxyvinyl)-3-phosphoshikimate = chorismate + phosphate. It participates in metabolic intermediate biosynthesis; chorismate biosynthesis; chorismate from D-erythrose 4-phosphate and phosphoenolpyruvate: step 7/7. In terms of biological role, catalyzes the anti-1,4-elimination of the C-3 phosphate and the C-6 proR hydrogen from 5-enolpyruvylshikimate-3-phosphate (EPSP) to yield chorismate, which is the branch point compound that serves as the starting substrate for the three terminal pathways of aromatic amino acid biosynthesis. This reaction introduces a second double bond into the aromatic ring system. In Prochlorococcus marinus (strain MIT 9215), this protein is Chorismate synthase.